The primary structure comprises 480 residues: RAC-alpha serine/threonine-protein kinase (480 aa).

The region spanning 5 to 108 is the PH domain; that stretch reads AIVKEGWLHK…WTTAIQTVAD (104 aa). 2 positions are modified to N6-acetyllysine: lysine 14 and lysine 20. 14–19 is a binding site for 1D-myo-inositol 1,3,4,5-tetrakisphosphate; it reads KRGEYI. Residues 23-25 and asparagine 53 each bind 1D-myo-inositol 1,3,4,5-tetrakisphosphate; that span reads RPR. Cysteine 60 and cysteine 77 form a disulfide bridge. Position 86 (arginine 86) interacts with 1D-myo-inositol 1,3,4,5-tetrakisphosphate. Serine 124 carries the phosphoserine modification. Serine 129 is subject to Phosphoserine; alternate. Serine 129 is a glycosylation site (O-linked (GlcNAc) serine; alternate). In terms of domain architecture, Protein kinase spans 150-408; it reads FEYLKLLGKG…AKEIMQHRFF (259 aa). Residue 156–164 participates in ATP binding; sequence LGKGTFGKV. Tyrosine 176 bears the Phosphotyrosine; by TNK2 mark. Position 179 (lysine 179) interacts with ATP. The Proton acceptor role is filled by aspartate 274. Lysine 284 is covalently cross-linked (Glycyl lysine isopeptide (Lys-Gly) (interchain with G-Cter in ubiquitin)). Cysteine 296 and cysteine 310 are oxidised to a cystine. A glycan (O-linked (GlcNAc) threonine) is linked at threonine 305. Threonine 308 carries the post-translational modification Phosphothreonine; by PDPK1. Threonine 312 is a glycosylation site (O-linked (GlcNAc) threonine). Residues 409–480 form the AGC-kinase C-terminal domain; sequence ASIVWQDVYE…QFSYSASATA (72 aa). Threonine 448 is subject to Phosphothreonine. The residue at position 450 (threonine 450) is a Phosphothreonine; by MTOR. The tract at residues 450–480 is disordered; sequence TPPDQDDSMEGVDSERRPHFPQFSYSASATA. Serine 473 carries an O-linked (GlcNAc) serine; alternate glycan. Phosphoserine; by MTOR; alternate is present on serine 473. Phosphotyrosine is present on tyrosine 474. Serine 477 bears the Phosphoserine mark. Threonine 479 bears the Phosphothreonine mark.

It belongs to the protein kinase superfamily. AGC Ser/Thr protein kinase family. RAC subfamily. As to quaternary structure, interacts (via the C-terminus) with CCDC88A (via its C-terminus) and THEM4 (via its C-terminus). Interacts with AKTIP. Interacts (via PH domain) with MTCP1, TCL1A and TCL1B. Interacts with TRAF6. Interacts with GRB10; the interaction leads to GRB10 phosphorylation thus promoting YWHAE binding. Interacts with RARA; the interaction phosphorylates RARA and represses its transactivation activity. Interacts with MAP3K5 and TNK2. Interacts with BAD, CLK2, PPP2R5B, STK3 and STK4. Interacts (via PH domain) with SIRT1. Interacts with SRPK2 in a phosphorylation-dependent manner. Interacts with RAF1. Interacts with PKN2 (via C-terminal domain); the interaction occurs with the C-terminus cleavage products of PKN2 in apoptotic cells. Interacts with TRIM13; the interaction ubiquitinates AKT1 leading to its proteasomal degradation. Interacts with and phosphorylated by PDPK1. Interacts with BTBD10. Interacts with KCTD20. Interacts with PA2G4. Interacts with PA2G4. Interacts with KIF14; the interaction is detected in the plasma membrane upon INS stimulation and promotes AKT1 phosphorylation. Interacts with FAM83B; activates the PI3K/AKT signaling cascade. Interacts with WDFY2 (via WD repeats 1-3). Forms a complex with WDFY2 and FOXO1. Interacts with FAM168A. Interacts with SYAP1 (via phosphorylated form and BSD domain); this interaction is enhanced in a mTORC2-mediated manner in response to epidermal growth factor (EGF) stimulation and activates AKT1. Interacts with PKHM3. Interacts with FKBP5/FKBP51; promoting interaction between Akt/AKT1 and PHLPP1, thereby enhancing dephosphorylation and subsequent activation of Akt/AKT1. Interacts with TMEM175; leading to formation of the lysoK(GF) complex. In terms of processing, O-GlcNAcylation at Thr-305 and Thr-312 inhibits activating phosphorylation at Thr-308 via disrupting the interaction between AKT1 and PDPK1. O-GlcNAcylation at Ser-473 also probably interferes with phosphorylation at this site. Post-translationally, phosphorylation on Thr-308, Ser-473 and Tyr-474 is required for full activity. Phosphorylation of the activation loop at Thr-308 by PDPK1/PDK1 is a prerequisite for full activation. Phosphorylation by mTORC2 in response to growth factors plays a key role in AKT1 activation: mTORC2 phosphorylates different sites depending on the context, such as Thr-450, Ser-473, Ser-477 or Thr-479, thereby facilitating subsequent phosphorylation of the activation loop by PDPK1/PDK1. Phosphorylation at Ser-473 by mTORC2 promotes ubiquitination and degradation by the proteasome. Also phosphorylated at Ser-477 and Thr-479 by CDK2, facilitating subsequent phosphorylation of the activation loop by PDPK1/PDK1. Activated TNK2 phosphorylates it on Tyr-176 resulting in its binding to the anionic plasma membrane phospholipid PA. This phosphorylated form localizes to the cell membrane, where it is targeted by PDPK1 and PDPK2 for further phosphorylations on Thr-308 and Ser-473 leading to its activation. Phosphorylated at Thr-308 and Ser-473 by IKBKE and TBK1. Ser-473 phosphorylation is enhanced by interaction with AGAP2 isoform 2 (PIKE-A). Ser-473 phosphorylation is enhanced by signaling through activated FLT3. Ser-473 is dephosphorylated by PHLPP. Dephosphorylated at Thr-308 and Ser-473 by PP2A phosphatase. The phosphorylated form of PPP2R5B is required for bridging AKT1 with PP2A phosphatase. Ser-473 is dephosphorylated by CPPED1, leading to termination of signaling. AIM2 acts as an inhibitor of AKT1 by inhibiting phosphorylation Ser-473: AIM2 acts both by inhibiting the activity of PRKDC/DNA-PK kinase and promoting dephosphorylation by PP2A phosphatase. Ubiquitinated; undergoes both 'Lys-48'- and 'Lys-63'-linked polyubiquitination. TRAF6-induced 'Lys-63'-linked AKT1 ubiquitination is critical for phosphorylation and activation. When ubiquitinated, it translocates to the plasma membrane, where it becomes phosphorylated. When fully phosphorylated and translocated into the nucleus, undergoes 'Lys-48'-polyubiquitination catalyzed by TTC3, leading to its degradation by the proteasome. Ubiquitinated via 'Lys-48'-linked polyubiquitination by ZNRF1, leading to its degradation by the proteasome. Also ubiquitinated by TRIM13 leading to its proteasomal degradation. Phosphorylated, undergoes 'Lys-48'-linked polyubiquitination preferentially at Lys-284 catalyzed by MUL1, leading to its proteasomal degradation. In terms of processing, acetylated on Lys-14 and Lys-20 by the histone acetyltransferases EP300 and KAT2B. Acetylation results in reduced phosphorylation and inhibition of activity. Deacetylated at Lys-14 and Lys-20 by SIRT1. SIRT1-mediated deacetylation relieves the inhibition. Post-translationally, cleavage by caspase-3/CASP3. Cleaved at the caspase-3 consensus site Asp-462 during apoptosis, resulting in down-regulation of the AKT signaling pathway and decreased cell survival.

It localises to the cytoplasm. The protein localises to the nucleus. It is found in the cell membrane. Its subcellular location is the mitochondrion intermembrane space. The enzyme catalyses L-seryl-[protein] + ATP = O-phospho-L-seryl-[protein] + ADP + H(+). It catalyses the reaction L-threonyl-[protein] + ATP = O-phospho-L-threonyl-[protein] + ADP + H(+). AKT1 is one of 3 closely related serine/threonine-protein kinases (AKT1, AKT2 and AKT3) called the AKT kinase, and which regulate many processes including metabolism, proliferation, cell survival, growth and angiogenesis. This is mediated through serine and/or threonine phosphorylation of a range of downstream substrates. Over 100 substrate candidates have been reported so far, but for most of them, no isoform specificity has been reported. AKT is responsible of the regulation of glucose uptake by mediating insulin-induced translocation of the SLC2A4/GLUT4 glucose transporter to the cell surface. Phosphorylation of PTPN1 at 'Ser-50' negatively modulates its phosphatase activity preventing dephosphorylation of the insulin receptor and the attenuation of insulin signaling. Phosphorylation of TBC1D4 triggers the binding of this effector to inhibitory 14-3-3 proteins, which is required for insulin-stimulated glucose transport. AKT also regulates the storage of glucose in the form of glycogen by phosphorylating GSK3A at 'Ser-21' and GSK3B at 'Ser-9', resulting in inhibition of its kinase activity. Phosphorylation of GSK3 isoforms by AKT is also thought to be one mechanism by which cell proliferation is driven. AKT also regulates cell survival via the phosphorylation of MAP3K5 (apoptosis signal-related kinase). Phosphorylation of 'Ser-83' decreases MAP3K5 kinase activity stimulated by oxidative stress and thereby prevents apoptosis. AKT mediates insulin-stimulated protein synthesis by phosphorylating TSC2 at 'Ser-939' and 'Thr-1462', thereby activating the mTORC1 signaling pathway, and leading to both phosphorylation of 4E-BP1 and in activation of RPS6KB1. Also regulates the mTORC1 signaling pathway by catalyzing phosphorylation of CASTOR1 and DEPDC5. AKT plays a role as key modulator of the AKT-mTOR signaling pathway controlling the tempo of the process of newborn neurons integration during adult neurogenesis, including correct neuron positioning, dendritic development and synapse formation. Part of a positive feedback loop of mTORC2 signaling by mediating phosphorylation of MAPKAP1/SIN1, promoting mTORC2 activation. AKT is involved in the phosphorylation of members of the FOXO factors (Forkhead family of transcription factors), leading to binding of 14-3-3 proteins and cytoplasmic localization. In particular, FOXO1 is phosphorylated at 'Thr-24', 'Ser-256' and 'Ser-319'. FOXO3 and FOXO4 are phosphorylated on equivalent sites. AKT has an important role in the regulation of NF-kappa-B-dependent gene transcription and positively regulates the activity of CREB1 (cyclic AMP (cAMP)-response element binding protein). The phosphorylation of CREB1 induces the binding of accessory proteins that are necessary for the transcription of pro-survival genes such as BCL2 and MCL1. AKT phosphorylates 'Ser-454' on ATP citrate lyase (ACLY), thereby potentially regulating ACLY activity and fatty acid synthesis. Activates the 3B isoform of cyclic nucleotide phosphodiesterase (PDE3B) via phosphorylation of 'Ser-273', resulting in reduced cyclic AMP levels and inhibition of lipolysis. Phosphorylates PIKFYVE on 'Ser-318', which results in increased PI(3)P-5 activity. The Rho GTPase-activating protein DLC1 is another substrate and its phosphorylation is implicated in the regulation cell proliferation and cell growth. Signals downstream of phosphatidylinositol 3-kinase (PI(3)K) to mediate the effects of various growth factors such as platelet-derived growth factor (PDGF), epidermal growth factor (EGF), insulin and insulin-like growth factor 1 (IGF1). AKT mediates the antiapoptotic effects of IGF1. Essential for the SPATA13-mediated regulation of cell migration and adhesion assembly and disassembly. May be involved in the regulation of the placental development. Phosphorylates STK4/MST1 at 'Thr-120' and 'Thr-387' leading to inhibition of its: kinase activity, nuclear translocation, autophosphorylation and ability to phosphorylate FOXO3. Phosphorylates STK3/MST2 at 'Thr-117' and 'Thr-384' leading to inhibition of its: cleavage, kinase activity, autophosphorylation at Thr-180, binding to RASSF1 and nuclear translocation. Phosphorylates SRPK2 and enhances its kinase activity towards SRSF2 and ACIN1 and promotes its nuclear translocation. Phosphorylates RAF1 at 'Ser-259' and negatively regulates its activity. Phosphorylation of BAD stimulates its pro-apoptotic activity. Phosphorylates KAT6A at 'Thr-369' and this phosphorylation inhibits the interaction of KAT6A with PML and negatively regulates its acetylation activity towards p53/TP53. Phosphorylates palladin (PALLD), modulating cytoskeletal organization and cell motility. Phosphorylates prohibitin (PHB), playing an important role in cell metabolism and proliferation. Phosphorylates CDKN1A, for which phosphorylation at 'Thr-145' induces its release from CDK2 and cytoplasmic relocalization. These recent findings indicate that the AKT1 isoform has a more specific role in cell motility and proliferation. Phosphorylates CLK2 thereby controlling cell survival to ionizing radiation. Phosphorylates PCK1 at 'Ser-90', reducing the binding affinity of PCK1 to oxaloacetate and changing PCK1 into an atypical protein kinase activity using GTP as donor. Also acts as an activator of TMEM175 potassium channel activity in response to growth factors: forms the lysoK(GF) complex together with TMEM175 and acts by promoting TMEM175 channel activation, independently of its protein kinase activity. Acts as a negative regulator of the cGAS-STING pathway by mediating phosphorylation of CGAS during mitosis, leading to its inhibition. Acts as a regulator of mitochondrial calcium uptake by mediating phosphorylation of MICU1 in the mitochondrial intermembrane space, impairing MICU1 maturation. Acts as an inhibitor of tRNA methylation by mediating phosphorylation of the N-terminus of METTL1, thereby inhibiting METTL1 methyltransferase activity. In response to LPAR1 receptor pathway activation, phosphorylates Rabin8/RAB3IP which alters its activity and phosphorylates WDR44 which induces WDR44 binding to Rab11, thereby switching Rab11 vesicular function from preciliary trafficking to endocytic recycling. This is RAC-alpha serine/threonine-protein kinase (AKT1) from Bos taurus (Bovine).